Consider the following 517-residue polypeptide: tRNA-2-methylthio-N(6)-dimethylallyladenosine synthase (517 aa).

The MTTase N-terminal domain maps to 18-137 (RTYQVRTYGC…LPTLLDRARH (120 aa)). [4Fe-4S] cluster-binding residues include cysteine 27, cysteine 66, cysteine 100, cysteine 174, cysteine 178, and cysteine 181. A Radical SAM core domain is found at 160 to 397 (RESDYAAWVS…ELQEQICMEE (238 aa)). Positions 399–470 (RVLIGRIVEL…PHHLIADAGI (72 aa)) constitute a TRAM domain.

Belongs to the methylthiotransferase family. MiaB subfamily. Monomer. Requires [4Fe-4S] cluster as cofactor.

The protein resides in the cytoplasm. The catalysed reaction is N(6)-dimethylallyladenosine(37) in tRNA + (sulfur carrier)-SH + AH2 + 2 S-adenosyl-L-methionine = 2-methylsulfanyl-N(6)-dimethylallyladenosine(37) in tRNA + (sulfur carrier)-H + 5'-deoxyadenosine + L-methionine + A + S-adenosyl-L-homocysteine + 2 H(+). Catalyzes the methylthiolation of N6-(dimethylallyl)adenosine (i(6)A), leading to the formation of 2-methylthio-N6-(dimethylallyl)adenosine (ms(2)i(6)A) at position 37 in tRNAs that read codons beginning with uridine. This is tRNA-2-methylthio-N(6)-dimethylallyladenosine synthase from Mycobacterium leprae (strain TN).